The primary structure comprises 612 residues: Methionine--tRNA ligase (612 aa).

A 'HIGH' region motif is present at residues 12 to 22; that stretch reads PYANGPRHIGH. Positions 144, 147, 157, and 160 each coordinate Zn(2+). Residues 350 to 354 carry the 'KMSKS' region motif; that stretch reads KFSSS. Ser-353 serves as a coordination point for ATP. The disordered stretch occupies residues 580-612; sequence IQPGTQLSKPKPLFPKLDPELAETGPEWAPVQK.

This sequence belongs to the class-I aminoacyl-tRNA synthetase family. MetG type 1 subfamily. In terms of assembly, monomer. Requires Zn(2+) as cofactor.

It localises to the cytoplasm. It catalyses the reaction tRNA(Met) + L-methionine + ATP = L-methionyl-tRNA(Met) + AMP + diphosphate. In terms of biological role, is required not only for elongation of protein synthesis but also for the initiation of all mRNA translation through initiator tRNA(fMet) aminoacylation. The polypeptide is Methionine--tRNA ligase (Corynebacterium jeikeium (strain K411)).